A 448-amino-acid polypeptide reads, in one-letter code: Homogentisate 1,2-dioxygenase (448 aa).

Fe cation contacts are provided by His340, Glu346, and His377.

This sequence belongs to the homogentisate dioxygenase family. Requires Fe cation as cofactor.

It catalyses the reaction homogentisate + O2 = 4-maleylacetoacetate + H(+). It functions in the pathway amino-acid degradation; L-phenylalanine degradation; acetoacetate and fumarate from L-phenylalanine: step 4/6. The sequence is that of Homogentisate 1,2-dioxygenase (hmgA) from Emericella nidulans (strain FGSC A4 / ATCC 38163 / CBS 112.46 / NRRL 194 / M139) (Aspergillus nidulans).